Here is a 417-residue protein sequence, read N- to C-terminus: Phosphoglycerate kinase, cytosolic (417 aa).

Residues V23, D24, F25, N26, R39, S61, H62, G64, R65, R132, H168, and R169 each coordinate (2R)-3-phosphoglycerate. G214 and A215 together coordinate ADP. Position 214 (G214) interacts with CDP. AMP is bound by residues A215 and K216. A215 is an ATP binding site. A215 provides a ligand contact to Mg(2+). K216 lines the (2R)-3-phosphoglycerate pocket. D219 is a CDP binding site. D219 provides a ligand contact to Mg(2+). Positions 220 and 238 each coordinate ADP. K220 is an AMP binding site. K220 serves as a coordination point for ATP. G238 is a binding site for CDP. Residues A239 and A311 each contribute to the AMP site. ATP is bound by residues A239 and A311. ADP contacts are provided by A311 and N335. CDP-binding residues include G336 and F341. ADP-binding residues include F341, E342, D374, and T375. Residue E342 participates in AMP binding. Positions 342, 374, and 375 each coordinate ATP. Residue D374 participates in Mg(2+) binding.

Belongs to the phosphoglycerate kinase family. In terms of assembly, monomer. Mg(2+) is required as a cofactor.

The protein resides in the cytoplasm. The catalysed reaction is (2R)-3-phosphoglycerate + ATP = (2R)-3-phospho-glyceroyl phosphate + ADP. It participates in carbohydrate degradation; glycolysis; pyruvate from D-glyceraldehyde 3-phosphate: step 2/5. The sequence is that of Phosphoglycerate kinase, cytosolic (PGKB) from Crithidia fasciculata.